A 235-amino-acid polypeptide reads, in one-letter code: Small ribosomal subunit protein uS3 (235 aa).

Residues 39–107 (IREILHKELK…DVVINIVEIR (69 aa)) enclose the KH type-2 domain. The tract at residues 215–235 (QDKRMAEGDGGGSSRPRRDAA) is disordered.

It belongs to the universal ribosomal protein uS3 family. In terms of assembly, part of the 30S ribosomal subunit. Forms a tight complex with proteins S10 and S14.

Its function is as follows. Binds the lower part of the 30S subunit head. Binds mRNA in the 70S ribosome, positioning it for translation. This chain is Small ribosomal subunit protein uS3, found in Rhodopseudomonas palustris (strain ATCC BAA-98 / CGA009).